A 253-amino-acid polypeptide reads, in one-letter code: ATP synthase subunit b 1 (253 aa).

Residues Leu2–Leu22 form a helical membrane-spanning segment.

Belongs to the ATPase B chain family. In terms of assembly, F-type ATPases have 2 components, F(1) - the catalytic core - and F(0) - the membrane proton channel. F(1) has five subunits: alpha(3), beta(3), gamma(1), delta(1), epsilon(1). F(0) has four main subunits: a(1), b(2) and c(10-14). The alpha and beta chains form an alternating ring which encloses part of the gamma chain. F(1) is attached to F(0) by a central stalk formed by the gamma and epsilon chains, while a peripheral stalk is formed by the delta and b chains.

The protein resides in the cell inner membrane. In terms of biological role, f(1)F(0) ATP synthase produces ATP from ADP in the presence of a proton or sodium gradient. F-type ATPases consist of two structural domains, F(1) containing the extramembraneous catalytic core and F(0) containing the membrane proton channel, linked together by a central stalk and a peripheral stalk. During catalysis, ATP synthesis in the catalytic domain of F(1) is coupled via a rotary mechanism of the central stalk subunits to proton translocation. Its function is as follows. Component of the F(0) channel, it forms part of the peripheral stalk, linking F(1) to F(0). The sequence is that of ATP synthase subunit b 1 from Prosthecochloris aestuarii (strain DSM 271 / SK 413).